A 141-amino-acid polypeptide reads, in one-letter code: D-aminoacyl-tRNA deacylase (141 aa).

A Gly-cisPro motif, important for rejection of L-amino acids motif is present at residues 133 to 134 (GP).

It belongs to the DTD family. In terms of assembly, homodimer.

It is found in the cytoplasm. It carries out the reaction glycyl-tRNA(Ala) + H2O = tRNA(Ala) + glycine + H(+). The enzyme catalyses a D-aminoacyl-tRNA + H2O = a tRNA + a D-alpha-amino acid + H(+). Its function is as follows. An aminoacyl-tRNA editing enzyme that deacylates mischarged D-aminoacyl-tRNAs. Also deacylates mischarged glycyl-tRNA(Ala), protecting cells against glycine mischarging by AlaRS. Acts via tRNA-based rather than protein-based catalysis; rejects L-amino acids rather than detecting D-amino acids in the active site. By recycling D-aminoacyl-tRNA to D-amino acids and free tRNA molecules, this enzyme counteracts the toxicity associated with the formation of D-aminoacyl-tRNA entities in vivo and helps enforce protein L-homochirality. The polypeptide is D-aminoacyl-tRNA deacylase (Beutenbergia cavernae (strain ATCC BAA-8 / DSM 12333 / CCUG 43141 / JCM 11478 / NBRC 16432 / NCIMB 13614 / HKI 0122)).